The chain runs to 425 residues: MLDLKRIRTDFDTVAAKLKNRGVSEDTLTHLKELDEKRRTLLVQSEELKAERNIASAAIAQAKRQKEDATQQIADMQKVSADIKTIDNQLVAIDQQVTDIITVLPNTPHDSVPVGADEEDNVEIRRWGTPRDFDFEVKAHWDLGEDLDILDWERGAKVTGARFLFYKNLGARLERALYNFMLDEHIKEGYQEIITPYMVNHDSMFGTGQYPKFKEDTFELADTNFVLIPTAEVPLTNYYRGEILDGKELPIYFTAMSPSFRSEAGSAGRDTRGLIRLHQFHKVEMVKFAKPEESYQELEKMTANAENILQKLGLPYRVISLCTGDMGFSAAKTYDLEVWIPAQNTYREISSCSNTEDFQARRAQIRYRDEADGKVKLLHTLNGSGLAVGRTVAAILENYQNEDGSVTIPEVLRPYMGGETVISPK.

Threonine 230–glutamate 232 contributes to the L-serine binding site. Arginine 261 to glutamate 263 contacts ATP. Residue glutamate 284 participates in L-serine binding. ATP is bound at residue glutamate 348–serine 351. Serine 384 contributes to the L-serine binding site.

The protein belongs to the class-II aminoacyl-tRNA synthetase family. Type-1 seryl-tRNA synthetase subfamily. In terms of assembly, homodimer. The tRNA molecule binds across the dimer.

It localises to the cytoplasm. The catalysed reaction is tRNA(Ser) + L-serine + ATP = L-seryl-tRNA(Ser) + AMP + diphosphate + H(+). It catalyses the reaction tRNA(Sec) + L-serine + ATP = L-seryl-tRNA(Sec) + AMP + diphosphate + H(+). Its pathway is aminoacyl-tRNA biosynthesis; selenocysteinyl-tRNA(Sec) biosynthesis; L-seryl-tRNA(Sec) from L-serine and tRNA(Sec): step 1/1. In terms of biological role, catalyzes the attachment of serine to tRNA(Ser). Is also able to aminoacylate tRNA(Sec) with serine, to form the misacylated tRNA L-seryl-tRNA(Sec), which will be further converted into selenocysteinyl-tRNA(Sec). This chain is Serine--tRNA ligase, found in Streptococcus pyogenes serotype M4 (strain MGAS10750).